Reading from the N-terminus, the 875-residue chain is Leucine--tRNA ligase (875 aa).

Residues 43-53 (PYPSGRIHMGH) carry the 'HIGH' region motif. A 'KMSKS' region motif is present at residues 633 to 637 (KMSKS). Lys-636 lines the ATP pocket.

This sequence belongs to the class-I aminoacyl-tRNA synthetase family.

The protein resides in the cytoplasm. The enzyme catalyses tRNA(Leu) + L-leucine + ATP = L-leucyl-tRNA(Leu) + AMP + diphosphate. This chain is Leucine--tRNA ligase, found in Bartonella bacilliformis (strain ATCC 35685 / KC583 / Herrer 020/F12,63).